We begin with the raw amino-acid sequence, 121 residues long: UPF0102 protein BHWA1_02005 (121 aa).

Belongs to the UPF0102 family.

The protein is UPF0102 protein BHWA1_02005 of Brachyspira hyodysenteriae (strain ATCC 49526 / WA1).